Consider the following 242-residue polypeptide: ATP synthase subunit a (242 aa).

Helical transmembrane passes span 29–49, 84–104, 114–134, 140–160, 181–201, and 203–223; these read SSIY…LAFY, FIPL…LGMT, IIVT…VGFI, FLTL…MIVI, MAGH…MIYL, and FLPI…AILQ.

The protein belongs to the ATPase A chain family. In terms of assembly, F-type ATPases have 2 components, CF(1) - the catalytic core - and CF(0) - the membrane proton channel. CF(1) has five subunits: alpha(3), beta(3), gamma(1), delta(1), epsilon(1). CF(0) has three main subunits: a(1), b(2) and c(9-12). The alpha and beta chains form an alternating ring which encloses part of the gamma chain. CF(1) is attached to CF(0) by a central stalk formed by the gamma and epsilon chains, while a peripheral stalk is formed by the delta and b chains.

The protein resides in the cell inner membrane. In terms of biological role, key component of the proton channel; it plays a direct role in the translocation of protons across the membrane. The protein is ATP synthase subunit a of Rickettsia typhi (strain ATCC VR-144 / Wilmington).